A 300-amino-acid polypeptide reads, in one-letter code: Sporulation protein SPS18 (300 aa).

The region spanning 11 to 130 (ENRKRLLRAK…LANEVRSNDI (120 aa)) is the Arf-GAP domain. The C4-type zinc-finger motif lies at 28-51 (CFECKSVNPQFVSCSFGIFICVNC).

This Saccharomyces cerevisiae (strain ATCC 204508 / S288c) (Baker's yeast) protein is Sporulation protein SPS18 (SPS18).